The following is a 1022-amino-acid chain: GPI ethanolamine phosphate transferase 1 (1022 aa).

The Cytoplasmic segment spans residues 1 to 6; it reads MARVGR. Residues 7–27 form a helical membrane-spanning segment; that stretch reads VGFLTLAVVFHLMYAYSIFDI. Residues 28-466 are Lumenal-facing; that stretch reads YFVSPIVSGM…LQTYDWLFLR (439 aa). 2 N-linked (GlcNAc...) asparagine glycosylation sites follow: asparagine 148 and asparagine 433. A helical membrane pass occupies residues 467–487; that stretch reads TIVSLGYLGWIAYALTTVIDL. Over 488-498 the chain is Cytoplasmic; sequence HVLHGKSESNR. A helical transmembrane segment spans residues 499–519; that stretch reads TTFSIMFFSSILVALFSVLLY. Residues 520-560 are Lumenal-facing; that stretch reads QGSSWRYYLYALFPIFFWEEVFARRKALLAGREILLGHVHS. A helical membrane pass occupies residues 561-581; sequence VSGYFAFAIQLLLYVGVLEAL. The Cytoplasmic segment spans residues 582 to 589; that stretch reads VQSYFHRD. Residues 590–610 form a helical membrane-spanning segment; sequence IFTVCFILGGFWPITYGTKFL. Residues 611-614 lie on the Lumenal side of the membrane; that stretch reads GQHK. A helical transmembrane segment spans residues 615 to 635; sequence LLSASWALGCFLMSIFTLLPA. The Cytoplasmic segment spans residues 636-640; sequence NKVED. A helical membrane pass occupies residues 641 to 661; the sequence is MMMISCGSLLMFLTGLLYLIF. At 662-685 the chain is on the lumenal side; that stretch reads ERSILGQKRSSDPNSVVSSCGSRT. A helical membrane pass occupies residues 686-706; sequence IMGAQVGMILLALIVTRSSVA. The Cytoplasmic segment spans residues 707–713; sequence SLQAKQG. The helical transmembrane segment at 714–734 threads the bilayer; it reads LPLGNQVLGWAILVSSLLLPF. Residues 735 to 749 are Lumenal-facing; sequence LHRLYPNSHYLHRLM. Helical transmembrane passes span 750–770 and 771–791; these read VIFL…EGLF and YFVF…IYIH. The Lumenal segment spans residues 792 to 837; sequence TTAPTREQDHSVANGSLPAKKPSPGNTVVVEGQPYRYRTLSVSDAR. Asparagine 805 carries an N-linked (GlcNAc...) asparagine glycan. Residues 838–858 form a helical membrane-spanning segment; it reads VALFFFFLLQSGFFSTGNIAS. Residues 859-880 are Cytoplasmic-facing; sequence VSSFSLDSVYRLIPIFNPFAQG. A helical transmembrane segment spans residues 881–901; that stretch reads ALLILKLLIPFAIISANLGIL. Residues 902 to 910 are Lumenal-facing; it reads NHRLEVAPS. The chain crosses the membrane as a helical span at residues 911-931; that stretch reads ALFMVVMSISDVMTLNFFYMV. Over 932–947 the chain is Cytoplasmic; the sequence is RDEGSWLEIGTTISHF. The helical transmembrane segment at 948-968 threads the bilayer; sequence CIASFLCTFVAVLEFLSELFI. Residues 969–1022 are Lumenal-facing; the sequence is SGVDFGHPATTVGSAVAKAVNGSVACGHSPDSDISGEDSTSVGITAKADPDARS. Asparagine 989 carries N-linked (GlcNAc...) asparagine glycosylation. Residues 998-1022 form a disordered region; that stretch reads PDSDISGEDSTSVGITAKADPDARS.

This sequence belongs to the PIGG/PIGN/PIGO family. PIGN subfamily.

The protein resides in the endoplasmic reticulum membrane. Its pathway is glycolipid biosynthesis; glycosylphosphatidylinositol-anchor biosynthesis. Its function is as follows. Ethanolamine phosphate transferase involved in glycosylphosphatidylinositol-anchor biosynthesis. Transfers ethanolamine phosphate to the first alpha-1,4-linked mannose of the glycosylphosphatidylinositol precursor of GPI-anchor. The polypeptide is GPI ethanolamine phosphate transferase 1 (mcd4) (Aspergillus oryzae (strain ATCC 42149 / RIB 40) (Yellow koji mold)).